The chain runs to 242 residues: HTH-type transcriptional regulator GadW (242 aa).

The region spanning 139–236 (GKVERLISFD…GVTPHQFSQH (98 aa)) is the HTH araC/xylS-type domain. 2 DNA-binding regions (H-T-H motif) span residues 156-177 (RDIAERMYTSESLIKKKLQDEN) and 203-226 (LHTIAEKCGYSSTSYFINTFRQYY).

In terms of assembly, homodimer.

Its function is as follows. Depending on the conditions (growth phase and medium), acts as a positive or negative regulator of gadA and gadBC. Repression occurs directly or via the repression of the expression of gadX. Activation occurs directly by the binding of GadW to the gadA and gadBC promoters. This chain is HTH-type transcriptional regulator GadW (gadW), found in Escherichia coli O6:H1 (strain CFT073 / ATCC 700928 / UPEC).